Here is a 494-residue protein sequence, read N- to C-terminus: Cytochrome c-552 (494 aa).

The signal sequence occupies residues methionine 1–valine 31. Histidine 116 contacts heme c. Heme contacts are provided by cysteine 144, cysteine 147, and lysine 148. Residues cysteine 182, cysteine 185, histidine 186, cysteine 224, cysteine 227, and histidine 228 each coordinate heme c. Glutamate 230, tyrosine 231, lysine 276, and glutamine 278 together coordinate Ca(2+). Residue tyrosine 231 coordinates substrate. Histidine 279 contributes to the substrate binding site. Heme c is bound by residues histidine 290, cysteine 297, cysteine 300, histidine 301, histidine 315, cysteine 328, cysteine 331, histidine 332, and histidine 407.

Belongs to the cytochrome c-552 family. It depends on Ca(2+) as a cofactor. Heme c is required as a cofactor.

The protein resides in the periplasm. It carries out the reaction 6 Fe(III)-[cytochrome c] + NH4(+) + 2 H2O = 6 Fe(II)-[cytochrome c] + nitrite + 8 H(+). It functions in the pathway nitrogen metabolism; nitrate reduction (assimilation). Catalyzes the reduction of nitrite to ammonia, consuming six electrons in the process. The protein is Cytochrome c-552 of Parabacteroides distasonis (strain ATCC 8503 / DSM 20701 / CIP 104284 / JCM 5825 / NCTC 11152).